The primary structure comprises 384 residues: Monomethylxanthine methyltransferase 2 (384 aa).

Residues Tyr-18, Cys-61, Asn-66, Asp-100, Leu-101, Ser-139, Phe-140, and Cys-156 each contribute to the S-adenosyl-L-homocysteine site. Positions 157, 160, and 161 each coordinate theobromine. Mg(2+) contacts are provided by Asn-178, Phe-262, and Asn-263. Tyr-368 serves as a coordination point for theobromine.

Belongs to the methyltransferase superfamily. Type-7 methyltransferase family. Mg(2+) serves as cofactor. Expressed, at low levels, in young leaves, floral buds and immature fruits (grains), but not in old leaves and mature fruits. Highly expressed in developing endosperm and flower buds. Detected in young leaves.

It catalyses the reaction 7-methylxanthine + S-adenosyl-L-methionine = theobromine + S-adenosyl-L-homocysteine + H(+). It functions in the pathway alkaloid biosynthesis. In terms of biological role, involved in the biosynthesis of caffeine. Catalyzes the conversion of 7-methylxanthine (7mX) to theobromine and with a lower activity of paraxanthine to caffeine. Does not have 1-N-methylation activity. This Coffea arabica (Arabian coffee) protein is Monomethylxanthine methyltransferase 2.